A 149-amino-acid chain; its full sequence is Large ribosomal subunit protein bL9 (149 aa).

This sequence belongs to the bacterial ribosomal protein bL9 family.

In terms of biological role, binds to the 23S rRNA. The sequence is that of Large ribosomal subunit protein bL9 from Dichelobacter nodosus (strain VCS1703A).